Here is a 744-residue protein sequence, read N- to C-terminus: Tripartite motif-containing protein 3 (744 aa).

A2 carries the N-acetylalanine modification. The interaction with KIF21B stretch occupies residues 2-290; that stretch reads AKREDSPGPE…LAAQAFPERP (289 aa). The residue at position 7 (S7) is a Phosphoserine. An RING-type zinc finger spans residues 22–63; sequence CSICLDRYRCPKVLPCLHTFCERCLQNYIPPQSLTLSCPVCR. A B box-type zinc finger spans residues 110–151; the sequence is GRPLSCPNHEGKTMEFYCEACETAMCGECRAGEHREHGTVLL. Residues C115, H118, C138, and H143 each coordinate Zn(2+). Residues 153–224 adopt a coiled-coil conformation; sequence DVVEQHKAAL…RKQALVSDLE (72 aa). The Filamin repeat unit spans residues 317–418; that stretch reads TTSATAHETV…VRGSPFRVRA (102 aa). Positions 419-464 are disordered; sequence LRPGDLPPSPDDVKRRVKSPGGPGSHVRQKAVRRPSSMYSTGGKRK. Residue S427 is modified to Phosphoserine. 6 NHL repeats span residues 473–516, 520–563, 564–605, 609–652, 656–699, and 700–743; these read VFRV…FSNE, KFRF…FSPE, GKFK…FQPN, VGRF…YSAD, LFKF…FDSS, and GSFL…YRYL.

Belongs to the TRIM/RBCC family. In terms of assembly, forms homooligomers. Interacts with TRIM2; this interaction reduces TRIM2 activity. Associates with myosin-Vb (MYO5B) and alpha-actinin-4 (ACTN4). Component of the CART complex, at least composed of ACTN4, HGS/HRS, MYO5B and TRIM3. Interacts with ZFYVE28/LST2. Interacts with KIF21B.

The protein localises to the cytoplasm. The protein resides in the early endosome. Its subcellular location is the golgi apparatus. It localises to the trans-Golgi network. It is found in the cell projection. The protein localises to the dendrite. The catalysed reaction is S-ubiquitinyl-[E2 ubiquitin-conjugating enzyme]-L-cysteine + [acceptor protein]-L-lysine = [E2 ubiquitin-conjugating enzyme]-L-cysteine + N(6)-ubiquitinyl-[acceptor protein]-L-lysine.. In terms of biological role, E3 ubiquitin ligase that plays essential roles in neuronal functions such as regulation of neuronal plasticity, learning, and memory. In addition to its neuronal functions, participates in other biological processes such as innate immunity or cell cycle regulation. Component of the cytoskeleton-associated recycling or transport complex in neurons, polyubiquitinates gamma-actin, thus regulating neuronal plasticity, learning, and memory. Ubiquitinates postsynaptic scaffold GKAP, a neuronal substrate involved in synaptic remodeling and thereby modulates dendritic spine morphology. Positively regulates motility of microtubule-dependent motor protein KIF21B. Induces growth arrest via its RING-dependent E3 ligase activity and ubiquinates CDKN1A. Positively regulates TLR3-mediated signaling by mediating 'Lys-63'-linked polyubiquitination of TLR3. In turn, promotes the recognition and sorting of polyubiquitinated TLR3 by the ESCRT complexes. This is Tripartite motif-containing protein 3 (Trim3) from Mus musculus (Mouse).